The primary structure comprises 314 residues: MPIKIPDQLPAAEVLGQENIFVMTESRAVTQNIRPLRVLILNLMPKKIETEIQLMRMLSNSPLQVDVDLLRIDDRESKNTPQAHLENFYHDFEQVRGNNYDGMIITGAPLGLVEFEEVVYWPRIVEIIEWSHQHVTSTLFLCWAVQAALKALYGMEKQTHGEKLSGVYRHHRLDENEPLLRGFDDEFVAPHSRYAAFDGDLIRAHTDLQIFAESEEAGVYLAATKDCRQVFVTGHPEYDVLTLDGEYQRDLAAGLDPVIPVNYYPNNDPALPPRASWRSHGHLLFSNWLNYYVYQLTSYRVEDIGKVFTYQQPK.

Cysteine 142 serves as the catalytic Acyl-thioester intermediate. Residues lysine 163 and serine 192 each contribute to the substrate site. Histidine 235 acts as the Proton acceptor in catalysis. The active site involves glutamate 237. Arginine 249 lines the substrate pocket.

The protein belongs to the MetA family.

The protein localises to the cytoplasm. The enzyme catalyses L-homoserine + succinyl-CoA = O-succinyl-L-homoserine + CoA. The protein operates within amino-acid biosynthesis; L-methionine biosynthesis via de novo pathway; O-succinyl-L-homoserine from L-homoserine: step 1/1. In terms of biological role, transfers a succinyl group from succinyl-CoA to L-homoserine, forming succinyl-L-homoserine. The polypeptide is Homoserine O-succinyltransferase (Aeromonas salmonicida (strain A449)).